The following is a 389-amino-acid chain: Na(+)/H(+) antiporter NhaA (389 aa).

Helical transmembrane passes span 14-34 (AGGILLLVAVALAMLMANSPL), 59-79 (LILWINDGLMAVFFLLIGLEV), 95-115 (SLPTFAAIGGMLVPAGVYLLF), 124-144 (AGWAIPAATDIAFALGIMALL), 154-174 (VFLLALAIIDDLGVIVIIALF), 177-197 (TDLSTISLVIASLAIAGLVGL), 213-233 (LILWVAVLKSGVHATLAGVII), 257-277 (PWSTFFILPVFAFANAGVYVG), 292-312 (IALGLMLGKPIGVMVFSYIAV), 328-348 (IAPVAAMCGIGFTMSMFIASL), and 363-383 (LGTLIGSIMAALVGYFWLSKV).

Belongs to the NhaA Na(+)/H(+) (TC 2.A.33) antiporter family.

The protein localises to the cell inner membrane. The enzyme catalyses Na(+)(in) + 2 H(+)(out) = Na(+)(out) + 2 H(+)(in). Functionally, na(+)/H(+) antiporter that extrudes sodium in exchange for external protons. The polypeptide is Na(+)/H(+) antiporter NhaA (Shewanella baltica (strain OS155 / ATCC BAA-1091)).